The following is a 302-amino-acid chain: ICOS ligand (302 aa).

A signal peptide spans 1–18; that stretch reads MRLGSPGLLFLLFSSLRA. Residues 19–129 enclose the Ig-like V-type domain; it reads DTQEKEVRAM…LGFQEVLSVE (111 aa). At 19 to 256 the chain is on the extracellular side; that stretch reads DTQEKEVRAM…VSTGEKNAAT (238 aa). The cysteines at positions 37 and 113 are disulfide-linked. N70, N137, N173, N186, and N225 each carry an N-linked (GlcNAc...) asparagine glycan. One can recognise an Ig-like C2-type domain in the interval 141–227; it reads PVVSAPHSPS…ENVLLQQNLT (87 aa). The cysteines at positions 158 and 216 are disulfide-linked. The helical transmembrane segment at 257 to 277 threads the bilayer; the sequence is WSILAVLCLLVVVAVAIGWVC. Residues 278 to 302 lie on the Cytoplasmic side of the membrane; it reads RDRCLQHSYAGAWAVSPETELTGHV.

Belongs to the immunoglobulin superfamily. BTN/MOG family. Interacts with CTLA4 (in vitro). As to expression, expressed on peripheral blood B-cells and monocytes, as well as on monocyte-derived dendritic cells (at protein level). Widely expressed (brain, heart, kidney, liver, lung, pancreas, placenta, skeletal muscle, bone marrow, colon, ovary, prostate, testis, lymph nodes, leukocytes, spleen, thymus and tonsil). In terms of tissue distribution, detected only in lymph nodes, leukocytes and spleen. Expressed on activated monocytes and dendritic cells.

The protein localises to the cell membrane. Ligand for the T-cell-specific cell surface receptor ICOS. Acts as a costimulatory signal for T-cell proliferation and cytokine secretion. Also induces B-cell proliferation and differentiation into plasma cells. Could play an important role in mediating local tissue responses to inflammatory conditions, as well as in modulating the secondary immune response by co-stimulating memory T-cell function. In endothelial cells, required for proper neutrophil transmigration in response to chemoattractants, such as CXCL8/IL8 or N-formyl-methionyl peptides (fMLP). The protein is ICOS ligand (ICOSLG) of Homo sapiens (Human).